We begin with the raw amino-acid sequence, 400 residues long: Acetylornithine aminotransferase (400 aa).

Residues 113 to 114 and F139 contribute to the pyridoxal 5'-phosphate site; that span reads GA. R142 contacts N(2)-acetyl-L-ornithine. 224–227 lines the pyridoxal 5'-phosphate pocket; it reads DEVQ. K253 carries the N6-(pyridoxal phosphate)lysine modification. S281 contacts N(2)-acetyl-L-ornithine. Residue T282 coordinates pyridoxal 5'-phosphate.

Belongs to the class-III pyridoxal-phosphate-dependent aminotransferase family. ArgD subfamily. As to quaternary structure, homodimer. Pyridoxal 5'-phosphate is required as a cofactor.

It is found in the cytoplasm. The catalysed reaction is N(2)-acetyl-L-ornithine + 2-oxoglutarate = N-acetyl-L-glutamate 5-semialdehyde + L-glutamate. It functions in the pathway amino-acid biosynthesis; L-arginine biosynthesis; N(2)-acetyl-L-ornithine from L-glutamate: step 4/4. The protein is Acetylornithine aminotransferase of Mycobacterium bovis (strain ATCC BAA-935 / AF2122/97).